The sequence spans 520 residues: GMP synthase [glutamine-hydrolyzing] (520 aa).

The Glutamine amidotransferase type-1 domain occupies K12–D205. C89 (nucleophile) is an active-site residue. Catalysis depends on residues H179 and E181. A GMPS ATP-PPase domain is found at W206–R395. S233–S239 lines the ATP pocket.

In terms of assembly, homodimer.

It carries out the reaction XMP + L-glutamine + ATP + H2O = GMP + L-glutamate + AMP + diphosphate + 2 H(+). The protein operates within purine metabolism; GMP biosynthesis; GMP from XMP (L-Gln route): step 1/1. In terms of biological role, catalyzes the synthesis of GMP from XMP. This Streptococcus pyogenes serotype M5 (strain Manfredo) protein is GMP synthase [glutamine-hydrolyzing].